Here is a 79-residue protein sequence, read N- to C-terminus: Small ribosomal subunit protein bS20 (79 aa).

The protein belongs to the bacterial ribosomal protein bS20 family.

In terms of biological role, binds directly to 16S ribosomal RNA. The chain is Small ribosomal subunit protein bS20 from Karelsulcia muelleri (strain GWSS) (Sulcia muelleri).